A 383-amino-acid chain; its full sequence is 1-deoxy-D-xylulose 5-phosphate reductoisomerase (383 aa).

NADPH contacts are provided by Thr10, Gly11, Ser12, Ile13, Gly36, Lys37, Asn38, and Asn122. Residue Lys123 participates in 1-deoxy-D-xylulose 5-phosphate binding. Glu124 is an NADPH binding site. Asp148 lines the Mn(2+) pocket. Positions 149, 150, 174, and 197 each coordinate 1-deoxy-D-xylulose 5-phosphate. Glu150 provides a ligand contact to Mn(2+). Gly203 is an NADPH binding site. Residues Ser210, Asn215, Lys216, and Glu219 each contribute to the 1-deoxy-D-xylulose 5-phosphate site. Glu219 is a binding site for Mn(2+).

The protein belongs to the DXR family. Mg(2+) is required as a cofactor. Requires Mn(2+) as cofactor.

The enzyme catalyses 2-C-methyl-D-erythritol 4-phosphate + NADP(+) = 1-deoxy-D-xylulose 5-phosphate + NADPH + H(+). Its pathway is isoprenoid biosynthesis; isopentenyl diphosphate biosynthesis via DXP pathway; isopentenyl diphosphate from 1-deoxy-D-xylulose 5-phosphate: step 1/6. Catalyzes the NADPH-dependent rearrangement and reduction of 1-deoxy-D-xylulose-5-phosphate (DXP) to 2-C-methyl-D-erythritol 4-phosphate (MEP). The sequence is that of 1-deoxy-D-xylulose 5-phosphate reductoisomerase from Bacillus licheniformis (strain ATCC 14580 / DSM 13 / JCM 2505 / CCUG 7422 / NBRC 12200 / NCIMB 9375 / NCTC 10341 / NRRL NRS-1264 / Gibson 46).